The following is a 1226-amino-acid chain: DNA-directed RNA polymerase subunit beta (1226 aa).

This sequence belongs to the RNA polymerase beta chain family. As to quaternary structure, the RNAP catalytic core consists of 2 alpha, 1 beta, 1 beta' and 1 omega subunit. When a sigma factor is associated with the core the holoenzyme is formed, which can initiate transcription.

It carries out the reaction RNA(n) + a ribonucleoside 5'-triphosphate = RNA(n+1) + diphosphate. Its function is as follows. DNA-dependent RNA polymerase catalyzes the transcription of DNA into RNA using the four ribonucleoside triphosphates as substrates. The protein is DNA-directed RNA polymerase subunit beta of Leptospira interrogans serogroup Icterohaemorrhagiae serovar copenhageni (strain Fiocruz L1-130).